The chain runs to 701 residues: Ribosomal RNA large subunit methyltransferase K/L (701 aa).

A THUMP domain is found at 43–154; it reads LLYQSLMWSR…KETAHISLDL (112 aa).

It belongs to the methyltransferase superfamily. RlmKL family.

The protein resides in the cytoplasm. The enzyme catalyses guanosine(2445) in 23S rRNA + S-adenosyl-L-methionine = N(2)-methylguanosine(2445) in 23S rRNA + S-adenosyl-L-homocysteine + H(+). It carries out the reaction guanosine(2069) in 23S rRNA + S-adenosyl-L-methionine = N(2)-methylguanosine(2069) in 23S rRNA + S-adenosyl-L-homocysteine + H(+). Specifically methylates the guanine in position 2445 (m2G2445) and the guanine in position 2069 (m7G2069) of 23S rRNA. The sequence is that of Ribosomal RNA large subunit methyltransferase K/L from Klebsiella pneumoniae subsp. pneumoniae (strain ATCC 700721 / MGH 78578).